We begin with the raw amino-acid sequence, 86 residues long: Small ribosomal subunit protein uS17 (86 aa).

Belongs to the universal ribosomal protein uS17 family. In terms of assembly, part of the 30S ribosomal subunit.

In terms of biological role, one of the primary rRNA binding proteins, it binds specifically to the 5'-end of 16S ribosomal RNA. This chain is Small ribosomal subunit protein uS17, found in Streptococcus gordonii (strain Challis / ATCC 35105 / BCRC 15272 / CH1 / DL1 / V288).